Consider the following 59-residue polypeptide: Conotoxin mr5a (59 aa).

The N-terminal stretch at 1-22 is a signal peptide; it reads MRCLPVFVILLLLIASAPSVDA. Residues 23–48 constitute a propeptide that is removed on maturation; it reads RPKTKDDMPLASFHDNAKRILQILQD.

Post-translationally, contains 2 disulfide bonds that can be either 'C1-C3, C2-C4' or 'C1-C4, C2-C3', since these disulfide connectivities have been observed for conotoxins with cysteine framework V (for examples, see AC P0DQQ7 and AC P81755). As to expression, expressed by the venom duct.

The protein localises to the secreted. The polypeptide is Conotoxin mr5a (Conus marmoreus (Marble cone)).